A 145-amino-acid chain; its full sequence is Cytochrome b (145 aa).

Residues 38–58 traverse the membrane as a helical segment; the sequence is FFALHFLLPFVLAALALMHLI. The heme b site is built by histidine 42 and histidine 56. Position 61 (histidine 61) interacts with a ubiquinone. The helical transmembrane segment at 85–105 threads the bilayer; sequence FIFKDLVTIFIFFIVLSIFVF.

The protein belongs to the cytochrome b family. As to quaternary structure, fungal cytochrome b-c1 complex contains 10 subunits; 3 respiratory subunits, 2 core proteins and 5 low-molecular weight proteins. Cytochrome b-c1 complex is a homodimer. Requires heme b as cofactor.

The protein resides in the mitochondrion inner membrane. Its function is as follows. Component of the ubiquinol-cytochrome c reductase complex (complex III or cytochrome b-c1 complex) that is part of the mitochondrial respiratory chain. The b-c1 complex mediates electron transfer from ubiquinol to cytochrome c. Contributes to the generation of a proton gradient across the mitochondrial membrane that is then used for ATP synthesis. The protein is Cytochrome b (cob) of Aspergillus flavus.